A 1450-amino-acid polypeptide reads, in one-letter code: Auxilin-like protein 1 (1450 aa).

11 disordered regions span residues 117 to 142 (NEDKKRNRRKGGNSSDVPLCNEGKKS), 241 to 318 (STRD…AESS), 357 to 383 (DSKIENKGNTKVEGITEESRDNNSQIL), 459 to 480 (NSKQQEPENLAPAKPEPDTKQE), 512 to 541 (SQKDEKQFTEKENSTVTQMVQDEESDSQEM), 556 to 575 (EETPQQTESKSEMNIEEKSE), 908 to 946 (DRSETDSNNSRERFDQTQEQAEETMIDGSIDTDTSRSSF), 961 to 1046 (EQHR…ELEH), 1077 to 1168 (GAAT…ERKQ), 1192 to 1241 (AGKT…AERA), and 1254 to 1328 (AMEK…SDRA). Residues 316 to 344 (ESSAALKKAIEEAQIRMNIAKQMMEKKKS) are a coiled coil. Residues 357-366 (DSKIENKGNT) show a composition bias toward basic and acidic residues. Basic and acidic residues-rich tracts occupy residues 512–524 (SQKDEKQFTEKEN), 564–575 (SKSEMNIEEKSE), 908–923 (DRSETDSNNSRERFDQ), 1037–1046 (RNGDKKELEH), 1117–1131 (NMKENEGEESCRSSM), 1147–1168 (ETVEEHLKKIDETREKERERKQ), and 1192–1226 (AGKTAMEKAKAVAHRREVPRKSEKGSVEVNDKLSS). Coiled-coil stretches lie at residues 1142–1184 (SQNK…RERA) and 1219–1257 (EVNDKLSSAEKASMQAKLRAERAAVERAITEVRERAMEK). Positions 1270 to 1299 (SYGGSKSFSSSGERRGSSSSGTENKSSGPS) are enriched in low complexity. Residues 1310–1328 (PIQRCKARSERHQRTSDRA) show a composition bias toward basic and acidic residues. Positions 1327–1355 (RAAEALAEKKLRDLKTQKEQTERNRLAEA) form a coiled coil. The region spanning 1377–1450 (TLQYILGAES…AWNKFGADER (74 aa)) is the J domain.

This chain is Auxilin-like protein 1 (AUL1), found in Arabidopsis thaliana (Mouse-ear cress).